Here is a 295-residue protein sequence, read N- to C-terminus: NAD kinase (295 aa).

Catalysis depends on D74, which acts as the Proton acceptor. NAD(+) is bound by residues 74–75 (DG), 148–149 (ND), H159, R176, D178, and 189–194 (TAYALS).

It belongs to the NAD kinase family. The cofactor is a divalent metal cation.

It localises to the cytoplasm. The catalysed reaction is NAD(+) + ATP = ADP + NADP(+) + H(+). Involved in the regulation of the intracellular balance of NAD and NADP, and is a key enzyme in the biosynthesis of NADP. Catalyzes specifically the phosphorylation on 2'-hydroxyl of the adenosine moiety of NAD to yield NADP. In Legionella pneumophila (strain Corby), this protein is NAD kinase.